The primary structure comprises 255 residues: Hydroxyacylglutathione hydrolase (255 aa).

Histidine 56, histidine 58, aspartate 60, histidine 61, histidine 114, aspartate 133, and histidine 171 together coordinate Zn(2+).

It belongs to the metallo-beta-lactamase superfamily. Glyoxalase II family. As to quaternary structure, monomer. Zn(2+) is required as a cofactor.

The enzyme catalyses an S-(2-hydroxyacyl)glutathione + H2O = a 2-hydroxy carboxylate + glutathione + H(+). It participates in secondary metabolite metabolism; methylglyoxal degradation; (R)-lactate from methylglyoxal: step 2/2. In terms of biological role, thiolesterase that catalyzes the hydrolysis of S-D-lactoyl-glutathione to form glutathione and D-lactic acid. The protein is Hydroxyacylglutathione hydrolase of Bradyrhizobium diazoefficiens (strain JCM 10833 / BCRC 13528 / IAM 13628 / NBRC 14792 / USDA 110).